The primary structure comprises 159 residues: S-ribosylhomocysteine lyase (159 aa).

Fe cation is bound by residues histidine 53, histidine 57, and cysteine 124.

Belongs to the LuxS family. As to quaternary structure, homodimer. Fe cation serves as cofactor.

The catalysed reaction is S-(5-deoxy-D-ribos-5-yl)-L-homocysteine = (S)-4,5-dihydroxypentane-2,3-dione + L-homocysteine. In terms of biological role, involved in the synthesis of autoinducer 2 (AI-2) which is secreted by bacteria and is used to communicate both the cell density and the metabolic potential of the environment. The regulation of gene expression in response to changes in cell density is called quorum sensing. Catalyzes the transformation of S-ribosylhomocysteine (RHC) to homocysteine (HC) and 4,5-dihydroxy-2,3-pentadione (DPD). This chain is S-ribosylhomocysteine lyase, found in Porphyromonas gingivalis (strain ATCC BAA-308 / W83).